A 212-amino-acid polypeptide reads, in one-letter code: Inner membrane-spanning protein YciB (212 aa).

The next 6 helical transmembrane spans lie at F19 to L39, A47 to L67, A82 to W102, T105 to G122, L147 to F167, and L177 to L197.

This sequence belongs to the YciB family.

The protein localises to the cell inner membrane. In terms of biological role, plays a role in cell envelope biogenesis, maintenance of cell envelope integrity and membrane homeostasis. The chain is Inner membrane-spanning protein YciB from Thioalkalivibrio sulfidiphilus (strain HL-EbGR7).